Here is a 368-residue protein sequence, read N- to C-terminus: 1-deoxy-D-xylulose 5-phosphate reductoisomerase (368 aa).

Threonine 10, glycine 11, serine 12, isoleucine 13, glutamine 38, and asparagine 100 together coordinate NADPH. Residue lysine 101 participates in 1-deoxy-D-xylulose 5-phosphate binding. Glutamate 102 provides a ligand contact to NADPH. Aspartate 125 provides a ligand contact to Mn(2+). Residues serine 126, glutamate 127, serine 151, and histidine 172 each contribute to the 1-deoxy-D-xylulose 5-phosphate site. Glutamate 127 serves as a coordination point for Mn(2+). Glycine 178 contacts NADPH. Residues serine 185, asparagine 190, lysine 191, and glutamate 194 each contribute to the 1-deoxy-D-xylulose 5-phosphate site. Glutamate 194 lines the Mn(2+) pocket.

It belongs to the DXR family. Mg(2+) serves as cofactor. Mn(2+) is required as a cofactor.

It catalyses the reaction 2-C-methyl-D-erythritol 4-phosphate + NADP(+) = 1-deoxy-D-xylulose 5-phosphate + NADPH + H(+). It participates in isoprenoid biosynthesis; isopentenyl diphosphate biosynthesis via DXP pathway; isopentenyl diphosphate from 1-deoxy-D-xylulose 5-phosphate: step 1/6. Its function is as follows. Catalyzes the NADPH-dependent rearrangement and reduction of 1-deoxy-D-xylulose-5-phosphate (DXP) to 2-C-methyl-D-erythritol 4-phosphate (MEP). This is 1-deoxy-D-xylulose 5-phosphate reductoisomerase from Tropheryma whipplei (strain TW08/27) (Whipple's bacillus).